Consider the following 437-residue polypeptide: ATP-dependent protease ATPase subunit HslU (437 aa).

Residues isoleucine 18, glycine 60–glutamate 65, aspartate 250, glutamate 315, and arginine 387 each bind ATP.

The protein belongs to the ClpX chaperone family. HslU subfamily. As to quaternary structure, a double ring-shaped homohexamer of HslV is capped on each side by a ring-shaped HslU homohexamer. The assembly of the HslU/HslV complex is dependent on binding of ATP.

The protein localises to the cytoplasm. Its function is as follows. ATPase subunit of a proteasome-like degradation complex; this subunit has chaperone activity. The binding of ATP and its subsequent hydrolysis by HslU are essential for unfolding of protein substrates subsequently hydrolyzed by HslV. HslU recognizes the N-terminal part of its protein substrates and unfolds these before they are guided to HslV for hydrolysis. This Dinoroseobacter shibae (strain DSM 16493 / NCIMB 14021 / DFL 12) protein is ATP-dependent protease ATPase subunit HslU.